The following is a 346-amino-acid chain: SUMO-activating enzyme subunit 1 (346 aa).

Residue methionine 1 is modified to N-acetylmethionine. Valine 2 is modified (N-acetylvaline; in SUMO-activating enzyme subunit 1, N-terminally processed). At serine 12 the chain carries Phosphoserine. Lysine 198 bears the N6-acetyllysine mark.

Belongs to the ubiquitin-activating E1 family. As to quaternary structure, heterodimer of SAE1 and UBA2/SAE2. The heterodimer corresponds to the two domains that are encoded on a single polypeptide chain in ubiquitin-activating enzyme E1. Interacts with UBE2I.

The protein resides in the nucleus. The protein operates within protein modification; protein sumoylation. Its function is as follows. The heterodimer acts as an E1 ligase for SUMO1, SUMO2, SUMO3, and probably SUMO4. It mediates ATP-dependent activation of SUMO proteins followed by formation of a thioester bond between a SUMO protein and a conserved active site cysteine residue on UBA2/SAE2. This is SUMO-activating enzyme subunit 1 (SAE1) from Bos taurus (Bovine).